We begin with the raw amino-acid sequence, 562 residues long: Solute carrier family 40 member 1 (562 aa).

Over 1 to 20 (MDSPASKKPRCERFREFFKS) the chain is Cytoplasmic. Residues 21 to 50 (AKFLIYVGHALSTWGDRMWNFAVAVFLVEL) traverse the membrane as a helical segment. Position 36 (Asp36) interacts with Fe cation. Over 51–54 (YGNS) the chain is Extracellular. Residues 55-81 (LLLTAVYGLVVAGSVLLLGAIIGDWVD) form a helical membrane-spanning segment. Over 82–84 (KNP) the chain is Cytoplasmic. A helical transmembrane segment spans residues 85–115 (RLKVAQTSLVVQNSAVILCGALLMAVFQFKQ). At 116-123 (QLSSMYDG) the chain is on the extracellular side. A helical transmembrane segment spans residues 124–159 (WLLTTCYIMVISIANIANLASTAMSITIQRDWVVVV). The Cytoplasmic segment spans residues 160-161 (AG). A helical membrane pass occupies residues 162–192 (DDRSKLADMNATVRIIDQLTNILAPMLVGQI). Topologically, residues 193-199 (MAFGSHF) are extracellular. A helical membrane pass occupies residues 200–226 (IGCGFISGWNLFSMCLEYFLLWKVYQK). Topologically, residues 227-300 (TPALAFKAGQ…DGWVAYYNQS (74 aa)) are cytoplasmic. Residues 301–327 (IFFAGMSLAFLYMTVLGFDCITTGYAY) form a helical membrane-spanning segment. Cys320 is a binding site for Fe cation. The Extracellular segment spans residues 328–332 (TQGLN). A helical membrane pass occupies residues 333-360 (GSVLSLLMGASAVSGICGTVAFTWIRKK). Residues 361 to 362 (CG) are Cytoplasmic-facing. A helical membrane pass occupies residues 363-385 (LIRTGFIAGVTQLSCLTLCVASV). Residues 386–444 (FAPGSPFDLSVSPFEEVLRHLFGDSGSLRESPTFIPTTEPPIQANVTVFEEAPPVESYM) lie on the Extracellular side of the membrane. The chain crosses the membrane as a helical span at residues 445–474 (SVGLLFAGVIAARVGLWSFDLTVTQLIQEN). Topologically, residues 475-479 (VIESE) are cytoplasmic. Residues 480–504 (RGVINGVQNSMNYLLDLLHFIMVIL) form a helical membrane-spanning segment. His498 is a Fe cation binding site. The Extracellular portion of the chain corresponds to 505–507 (APN). The chain crosses the membrane as a helical span at residues 508–533 (PEAFGLLVIISVSFVAMGHMMYFRFA). Over 534–562 (YKSLGSRLFLFCSPEQKPDPNIPSLPNSV) the chain is Cytoplasmic.

This sequence belongs to the ferroportin (FP) (TC 2.A.100) family. SLC40A subfamily. In terms of tissue distribution, expressed in the yolk sac and placenta.

The protein resides in the cell membrane. It localises to the basolateral cell membrane. It catalyses the reaction Fe(2+)(in) = Fe(2+)(out). Functionally, transports Fe(2+) from the inside of a cell to the outside of the cell, playing a key role for maintaining systemic iron homeostasis. May be involved in transfer of Fe(2+) between maternal and fetal circulation. The sequence is that of Solute carrier family 40 member 1 (slc40a1) from Danio rerio (Zebrafish).